Consider the following 120-residue polypeptide: Ribosome-binding factor A (120 aa).

This sequence belongs to the RbfA family. Monomer. Binds 30S ribosomal subunits, but not 50S ribosomal subunits or 70S ribosomes.

The protein localises to the cytoplasm. Its function is as follows. One of several proteins that assist in the late maturation steps of the functional core of the 30S ribosomal subunit. Associates with free 30S ribosomal subunits (but not with 30S subunits that are part of 70S ribosomes or polysomes). Required for efficient processing of 16S rRNA. May interact with the 5'-terminal helix region of 16S rRNA. In Chlamydia felis (strain Fe/C-56) (Chlamydophila felis), this protein is Ribosome-binding factor A.